The sequence spans 74 residues: uncharacterized protein (74 aa).

Disordered stretches follow at residues 1–26 and 46–74; these read MNGP…SGVF and ITNS…SFTQ. A helical membrane pass occupies residues 34 to 50; the sequence is VSNKSIMLISLKITNSP. Residues 47 to 74 are compositionally biased toward low complexity; the sequence is TNSPNSNSRGSSSSSSTSKSSSKTSFTQ.

The protein localises to the membrane. This is an uncharacterized protein from Dictyostelium discoideum (Social amoeba).